Here is a 447-residue protein sequence, read N- to C-terminus: UDP-glycosyltransferase 79B10 (447 aa).

UDP-alpha-D-glucose-binding positions include Ser260, 319–321 (VQQ), 336–344 (HCGFGSMWE), and 358–361 (LADQ).

This sequence belongs to the UDP-glycosyltransferase family.

The sequence is that of UDP-glycosyltransferase 79B10 (UGT79B10) from Arabidopsis thaliana (Mouse-ear cress).